A 564-amino-acid polypeptide reads, in one-letter code: NADPH oxidase 1 (564 aa).

Residues 1-9 (MGNWVVNHW) lie on the Cytoplasmic side of the membrane. Residues 10-30 (FSVLFLVVWLGLNVFLFVDAF) form a helical membrane-spanning segment. Residues 31–44 (LKYEKADKYYYTRK) are Extracellular-facing. Residues 45–72 (ILGSTLACARASALCLNFNSTLILLPVC) form a helical membrane-spanning segment. In terms of domain architecture, Ferric oxidoreductase spans 54 to 283 (RASALCLNFN…LAPVILYICE (230 aa)). Residues 73–102 (RNLLSFLRGTCSFCSRTLRKQLDHNLTFHK) lie on the Cytoplasmic side of the membrane. Heme contacts are provided by His101 and His115. Residues 103–123 (LVAYMICLHTAIHIIAHLFNF) form a helical membrane-spanning segment. Over 124–168 (DCYSRSRQATDGSLASILSSLSHDEKKGGSWLNPIQSRNTTVEYV) the chain is Extracellular. Asn162 carries an N-linked (GlcNAc...) asparagine glycan. The helical transmembrane segment at 169–189 (TFTSIAGLTGVIMTIALILMV) threads the bilayer. The Cytoplasmic segment spans residues 190–206 (TSATEFIRRSYFEVFWY). Residues 207–227 (THHLFIFYILGLGIHGIGGIV) traverse the membrane as a helical segment. The heme site is built by His209 and His221. Over 228-396 (RGQTEESMNE…TASEDVFQYE (169 aa)) the chain is Extracellular. The N-linked (GlcNAc...) asparagine glycan is linked to Asn236. An FAD-binding FR-type domain is found at 284–391 (RILRFYRSQQ…DGPFGTASED (108 aa)). 338 to 344 (HPFTLTS) serves as a coordination point for FAD. Residues 397–417 (VAVLVGAGIGVTPFASILKSI) traverse the membrane as a helical segment. Positions 397 to 536 (VAVLVGAGIG…GVFLCGPRTL (140 aa)) are interaction with NOXO1. The Cytoplasmic portion of the chain corresponds to 418–564 (WYKFQCADHN…VQFYFNKENF (147 aa)). Phosphothreonine is present on Thr430.

In terms of assembly, NOX1, NOXA1, NOXO1, RAC1 and CYBA forms a functional multimeric complex supporting reactive oxygen species (ROS) production. Interacts with NOXO1. Interacts (via FAD-binding FR-type domain) with ARHGEF7 (via PH domain). The phosphorylated form at Thr-430 interacts with NOXA1 with greater affinity. FAD serves as cofactor. Phosphorylation at Thr-430 mediated by PKC/PRKBC positively regulates its interaction with NOXA1 and enzyme activity. In terms of tissue distribution, detected in colon, uterus, prostate, and colon carcinoma, but not in peripheral blood leukocytes.

The protein resides in the cell projection. The protein localises to the invadopodium membrane. Its subcellular location is the cell membrane. The catalysed reaction is NADPH + 2 O2 = 2 superoxide + NADP(+) + H(+). Its activity is regulated as follows. The oxidase activity is potentiated by NOXA1, NOXO1 and RAC1. In terms of biological role, NADPH oxidase that catalyzes the generation of superoxide from molecular oxygen utilizing NADPH as an electron donor. This Homo sapiens (Human) protein is NADPH oxidase 1.